A 338-amino-acid polypeptide reads, in one-letter code: D-erythrose-4-phosphate dehydrogenase (338 aa).

11–12 provides a ligand contact to NAD(+); the sequence is RI. Substrate contacts are provided by residues 153 to 155, R199, 212 to 213, and R235; these read SCT and TK. The active-site Nucleophile is the C154. Residue N317 coordinates NAD(+).

This sequence belongs to the glyceraldehyde-3-phosphate dehydrogenase family. Epd subfamily. Homotetramer.

Its subcellular location is the cytoplasm. It carries out the reaction D-erythrose 4-phosphate + NAD(+) + H2O = 4-phospho-D-erythronate + NADH + 2 H(+). It functions in the pathway cofactor biosynthesis; pyridoxine 5'-phosphate biosynthesis; pyridoxine 5'-phosphate from D-erythrose 4-phosphate: step 1/5. Its function is as follows. Catalyzes the NAD-dependent conversion of D-erythrose 4-phosphate to 4-phosphoerythronate. This chain is D-erythrose-4-phosphate dehydrogenase, found in Shewanella oneidensis (strain ATCC 700550 / JCM 31522 / CIP 106686 / LMG 19005 / NCIMB 14063 / MR-1).